A 497-amino-acid chain; its full sequence is Paired box protein Pax-2-A (497 aa).

A DNA-binding region (paired) is located at residues glycine 16–lysine 142. The tract at residues glycine 19–threonine 75 is PAI subdomain. The interval lysine 94–lysine 142 is RED subdomain. The tract at residues valine 143–leucine 224 is disordered. Over residues valine 166 to serine 178 the composition is skewed to low complexity.

In terms of tissue distribution, expression becomes spatially localized at mid-gastrula stages and is confined to the nervous system (midbrain, hindbrain, spinal cord), sensory organs (optic vesicle and stalk, otic vesicle), visceral arches, developing excretory system (pronephros, pronephric duct, rectal diverticulum, proctodaeum) and thyroid gland. Splicing does not appear to be tissue-specific and tissues displayed the same spectrum of splice variants.

The protein resides in the nucleus. Functionally, probable transcription factor. Involved in kidney development, acting synergistically with lhx1/lim-1 in pronephric morphogenesis during the tailbud stages. This Xenopus laevis (African clawed frog) protein is Paired box protein Pax-2-A (pax2-a).